The sequence spans 599 residues: UvrABC system protein C (599 aa).

In terms of domain architecture, GIY-YIG spans 18–96; the sequence is QLPGVYKMLG…IKQHRPPYNI (79 aa). The UVR domain maps to 207–242; sequence KELNQELIAKMEQAAADLEFEKAVFYRDRLSLLREV.

The protein belongs to the UvrC family. As to quaternary structure, interacts with UvrB in an incision complex.

The protein localises to the cytoplasm. The UvrABC repair system catalyzes the recognition and processing of DNA lesions. UvrC both incises the 5' and 3' sides of the lesion. The N-terminal half is responsible for the 3' incision and the C-terminal half is responsible for the 5' incision. In Acinetobacter baumannii (strain SDF), this protein is UvrABC system protein C.